The chain runs to 80 residues: Cytochrome c oxidase subunit 7B, mitochondrial (80 aa).

A mitochondrion-targeting transit peptide spans 1 to 24 (MFPLAKNALSRLRVQSIQQAVARQ). Topologically, residues 25-32 (IHQKRAPD) are mitochondrial matrix. The chain crosses the membrane as a helical span at residues 33 to 59 (FHDKYGNAVLASGATFCVAVWVYMATQ). Residues 60–80 (IGIEWNPSPVGRVTPKEWREQ) lie on the Mitochondrial intermembrane side of the membrane.

This sequence belongs to the cytochrome c oxidase VIIb family. In terms of assembly, component of the cytochrome c oxidase (complex IV, CIV), a multisubunit enzyme composed of 14 subunits. The complex is composed of a catalytic core of 3 subunits MT-CO1, MT-CO2 and MT-CO3, encoded in the mitochondrial DNA, and 11 supernumerary subunits COX4I1 (or COX4I2), COX5A, COX5B, COX6A2 (or COX6A1), COX6B1 (or COX6B2), COX6C, COX7A1 (or COX7A2), COX7B, COX7C, COX8B and NDUFA4, which are encoded in the nuclear genome. The complex exists as a monomer or a dimer and forms supercomplexes (SCs) in the inner mitochondrial membrane with NADH-ubiquinone oxidoreductase (complex I, CI) and ubiquinol-cytochrome c oxidoreductase (cytochrome b-c1 complex, complex III, CIII), resulting in different assemblies (supercomplex SCI(1)III(2)IV(1) and megacomplex MCI(2)III(2)IV(2)).

Its subcellular location is the mitochondrion inner membrane. Its pathway is energy metabolism; oxidative phosphorylation. Its function is as follows. Component of the cytochrome c oxidase, the last enzyme in the mitochondrial electron transport chain which drives oxidative phosphorylation. The respiratory chain contains 3 multisubunit complexes succinate dehydrogenase (complex II, CII), ubiquinol-cytochrome c oxidoreductase (cytochrome b-c1 complex, complex III, CIII) and cytochrome c oxidase (complex IV, CIV), that cooperate to transfer electrons derived from NADH and succinate to molecular oxygen, creating an electrochemical gradient over the inner membrane that drives transmembrane transport and the ATP synthase. Cytochrome c oxidase is the component of the respiratory chain that catalyzes the reduction of oxygen to water. Electrons originating from reduced cytochrome c in the intermembrane space (IMS) are transferred via the dinuclear copper A center (CU(A)) of subunit 2 and heme A of subunit 1 to the active site in subunit 1, a binuclear center (BNC) formed by heme A3 and copper B (CU(B)). The BNC reduces molecular oxygen to 2 water molecules using 4 electrons from cytochrome c in the IMS and 4 protons from the mitochondrial matrix. Plays a role in proper central nervous system (CNS) development in vertebrates. The sequence is that of Cytochrome c oxidase subunit 7B, mitochondrial (COX7B) from Bos taurus (Bovine).